Reading from the N-terminus, the 835-residue chain is Ribonuclease R (835 aa).

In terms of domain architecture, RNB spans 267–593 (RVDLRELPLV…LLHRAIKYLI (327 aa)). In terms of domain architecture, S1 motif spans 652–733 (GDELEGVIAN…DDKQIDFELV (82 aa)). A compositionally biased stretch (basic and acidic residues) spans 739 to 754 (LRGEGKTAKKRAAEAK). The interval 739–835 (LRGEGKTAKK…KTKRTKQDAQ (97 aa)) is disordered. A compositionally biased stretch (basic residues) spans 755-764 (RKAKEKKRAA). A compositionally biased stretch (low complexity) spans 765 to 777 (TRSSSKESATARA). The span at 783–793 (PTKRPEQTDSG) shows a compositional bias: basic and acidic residues. A compositionally biased stretch (basic residues) spans 809-829 (KPKVKKAHKKKPHSKPKKTKR).

It belongs to the RNR ribonuclease family. RNase R subfamily.

It is found in the cytoplasm. It carries out the reaction Exonucleolytic cleavage in the 3'- to 5'-direction to yield nucleoside 5'-phosphates.. Its function is as follows. 3'-5' exoribonuclease that releases 5'-nucleoside monophosphates and is involved in maturation of structured RNAs. This Vibrio parahaemolyticus serotype O3:K6 (strain RIMD 2210633) protein is Ribonuclease R.